The primary structure comprises 320 residues: uncharacterized protein (320 aa).

As to quaternary structure, interacts with VP1054, VP39 and VP80.

It is found in the virion. The protein localises to the host nucleus. The protein resides in the host cytoplasm. Its function is as follows. Plays a role in nucleocapsid assembly and is essential for viral replication. Distributed over the cylindrical capsid sheath of nucleocapsid. This is an uncharacterized protein from Lepidoptera (butterflies and moths).